The chain runs to 183 residues: MQKQVVVMDEAAIKRALTRVSYEIIERNKGTKDLALVGIKTRGIYLAERLHTRILEIEGMDVPVGDIDITLYRDDLSYKDDDTREPAVHGTNIPFDINGKKVVLVDDVLYTGRTVRAAMDALMDVGRPAQIHLAVLADRGHRELPIRADYVGKNIPTSANERVEVRLTDVDHAEDAVIINKNE.

The PRPP-binding motif lies at 102-114 (VVLVDDVLYTGRT).

This sequence belongs to the purine/pyrimidine phosphoribosyltransferase family. PyrR subfamily. As to quaternary structure, homodimer and homohexamer; in equilibrium.

It catalyses the reaction UMP + diphosphate = 5-phospho-alpha-D-ribose 1-diphosphate + uracil. Its function is as follows. Regulates transcriptional attenuation of the pyrimidine nucleotide (pyr) operon by binding in a uridine-dependent manner to specific sites on pyr mRNA. This disrupts an antiterminator hairpin in the RNA and favors formation of a downstream transcription terminator, leading to a reduced expression of downstream genes. Functionally, also displays a weak uracil phosphoribosyltransferase activity which is not physiologically significant. This chain is Bifunctional protein PyrR, found in Listeria welshimeri serovar 6b (strain ATCC 35897 / DSM 20650 / CCUG 15529 / CIP 8149 / NCTC 11857 / SLCC 5334 / V8).